The sequence spans 246 residues: ATP synthase subunit a (246 aa).

A propeptide spans 1–3 (MFY) (removed in mature form). Helical transmembrane passes span 20–40 (ILTL…SIIF), 56–76 (WGVA…SQIG), 82–102 (FFPL…ISMI), 112–132 (LVAI…LGLY), 138–158 (FFAL…LVLI), 176–196 (ANIL…VNLM), and 203–223 (FIGG…EVGI).

It belongs to the ATPase A chain family. In terms of assembly, F-type ATPases have 2 components, CF(1) - the catalytic core - and CF(0) - the membrane proton channel. CF(1) has five subunits: alpha(3), beta(3), gamma(1), delta(1), epsilon(1). CF(0) has three main subunits: a, b and c.

Its subcellular location is the mitochondrion inner membrane. Mitochondrial membrane ATP synthase (F(1)F(0) ATP synthase or Complex V) produces ATP from ADP in the presence of a proton gradient across the membrane which is generated by electron transport complexes of the respiratory chain. F-type ATPases consist of two structural domains, F(1) - containing the extramembraneous catalytic core and F(0) - containing the membrane proton channel, linked together by a central stalk and a peripheral stalk. During catalysis, ATP synthesis in the catalytic domain of F(1) is coupled via a rotary mechanism of the central stalk subunits to proton translocation. Key component of the proton channel; it may play a direct role in the translocation of protons across the membrane. This chain is ATP synthase subunit a (ATP6), found in Candida albicans (strain SC5314 / ATCC MYA-2876) (Yeast).